The following is an 800-amino-acid chain: Putative antiporter subunit mnhA2 (800 aa).

20 helical membrane passes run 1–21, 33–53, 78–98, 118–138, 167–187, 207–227, 241–261, 273–293, 300–320, 331–351, 387–407, 424–444, 472–492, 527–547, 595–615, 627–647, 651–671, 676–696, 712–732, and 768–788; these read MSLVYLLIAILVIMAMILLTS, IALTAPVIASIYFLLQVPSVI, GLSLMFSLIISLIGIAVFFYA, LFMFSMLGIVLADNTILMYVF, FMITVFGGLALLVGFIMLYIM, ALFIPMIIMFLLGAFTKSAQF, TPVSAYLHSATMVKAGIFLLL, YIYIVTFVGLITMLFGSITAL, GILAYSTISQLGMIMAMVGIG, IASIYVFVLFAALFHLMNHAI, LVMMIAALSMAGVPFLNGFLS, FSLISMIIIVCMGVIASIFTF, PWLFSLPSLILMVLVPVIFFV, GFNIPLLLTIIIILLGSVLAI, IIMTLGIFMVIIGYGYIRIGL, GPLEVILAIVTVIIGLSLIFI, LTMVILNGVIGFVVTLFFIAM, LALTQLVVETITTILFIVSFS, IIKISVSLMMALIVVSLIFIA, and LDTLFEGLVLIITGLGIYTLL.

It belongs to the CPA3 antiporters (TC 2.A.63) subunit A family. May form a heterooligomeric complex that consists of seven subunits: mnhA2, mnhB2, mnhC2, mnhD2, mnhE2, mnhF2 and mnhG2.

It is found in the cell membrane. In Staphylococcus aureus (strain MRSA252), this protein is Putative antiporter subunit mnhA2 (mnhA2).